Consider the following 402-residue polypeptide: S-adenosylmethionine synthase (402 aa).

Residue His-15 coordinates ATP. A Mg(2+)-binding site is contributed by Asp-17. Glu-43 contributes to the K(+) binding site. L-methionine contacts are provided by Glu-56 and Gln-99. The segment at Gln-99–Thr-109 is flexible loop. Residues Asp-174–Lys-176, Arg-247–Phe-248, Asp-256, Arg-262–Lys-263, Ala-279, and Lys-283 contribute to the ATP site. An L-methionine-binding site is contributed by Asp-256. Position 287 (Lys-287) interacts with L-methionine.

The protein belongs to the AdoMet synthase family. Homotetramer; dimer of dimers. Mg(2+) is required as a cofactor. K(+) serves as cofactor.

It localises to the cytoplasm. The enzyme catalyses L-methionine + ATP + H2O = S-adenosyl-L-methionine + phosphate + diphosphate. It participates in amino-acid biosynthesis; S-adenosyl-L-methionine biosynthesis; S-adenosyl-L-methionine from L-methionine: step 1/1. In terms of biological role, catalyzes the formation of S-adenosylmethionine (AdoMet) from methionine and ATP. The overall synthetic reaction is composed of two sequential steps, AdoMet formation and the subsequent tripolyphosphate hydrolysis which occurs prior to release of AdoMet from the enzyme. The protein is S-adenosylmethionine synthase of Streptomyces griseus subsp. griseus (strain JCM 4626 / CBS 651.72 / NBRC 13350 / KCC S-0626 / ISP 5235).